A 62-amino-acid polypeptide reads, in one-letter code: Cobrotoxin II (62 aa).

The span at 1–16 (LECHNQQSSQTPTTTG) shows a compositional bias: polar residues. A disordered region spans residues 1–23 (LECHNQQSSQTPTTTGCSGGENN). Intrachain disulfides connect C3–C24, C17–C41, C43–C54, and C55–C60.

This sequence belongs to the three-finger toxin family. Short-chain subfamily. Type I alpha-neurotoxin sub-subfamily. Expressed by the venom gland.

It is found in the secreted. Its function is as follows. Binds to muscle nicotinic acetylcholine receptor (nAChR) and inhibit acetylcholine from binding to the receptor, thereby impairing neuromuscular transmission. The sequence is that of Cobrotoxin II from Naja kaouthia (Monocled cobra).